The chain runs to 192 residues: Peptidyl-tRNA hydrolase (192 aa).

Residue tyrosine 14 participates in tRNA binding. The active-site Proton acceptor is the histidine 19. TRNA contacts are provided by tyrosine 64, asparagine 66, and asparagine 112.

The protein belongs to the PTH family. As to quaternary structure, monomer.

It localises to the cytoplasm. It carries out the reaction an N-acyl-L-alpha-aminoacyl-tRNA + H2O = an N-acyl-L-amino acid + a tRNA + H(+). Hydrolyzes ribosome-free peptidyl-tRNAs (with 1 or more amino acids incorporated), which drop off the ribosome during protein synthesis, or as a result of ribosome stalling. Functionally, catalyzes the release of premature peptidyl moieties from peptidyl-tRNA molecules trapped in stalled 50S ribosomal subunits, and thus maintains levels of free tRNAs and 50S ribosomes. This Anaeromyxobacter sp. (strain K) protein is Peptidyl-tRNA hydrolase.